The chain runs to 200 residues: Elongation factor Ts (200 aa).

Residues 82–85 (TDFV) are involved in Mg(2+) ion dislocation from EF-Tu.

The protein belongs to the EF-Ts family.

It localises to the cytoplasm. Functionally, associates with the EF-Tu.GDP complex and induces the exchange of GDP to GTP. It remains bound to the aminoacyl-tRNA.EF-Tu.GTP complex up to the GTP hydrolysis stage on the ribosome. This chain is Elongation factor Ts, found in Solidesulfovibrio magneticus (strain ATCC 700980 / DSM 13731 / RS-1) (Desulfovibrio magneticus).